Consider the following 97-residue polypeptide: MIKYILGIVIFIAIVLVAITIGANNDQIITFNYIVAESQFQLSSLVAILFGLGLILGWLITAFFYIKLKLKNMALARQVKRQTLQINELTTTRDKVV.

The next 2 membrane-spanning stretches (helical) occupy residues 1–21 and 46–66; these read MIKY…AITI and VAIL…FFYI. Positions 67-95 form a coiled coil; the sequence is KLKLKNMALARQVKRQTLQINELTTTRDK.

Belongs to the LapA family.

The protein localises to the cell inner membrane. Its function is as follows. Involved in the assembly of lipopolysaccharide (LPS). In Haemophilus influenzae (strain ATCC 51907 / DSM 11121 / KW20 / Rd), this protein is Probable lipopolysaccharide assembly protein A.